Reading from the N-terminus, the 150-residue chain is Auxin-binding protein 5 (150 aa).

Residues methionine 1–serine 41 form the signal peptide. 3 residues coordinate Zn(2+): histidine 98, histidine 100, and glutamate 104. Asparagine 136 carries N-linked (GlcNAc...) asparagine glycosylation. Histidine 147 lines the Zn(2+) pocket.

In terms of assembly, homodimer.

The protein localises to the endoplasmic reticulum lumen. This is probably a receptor for the plant hormone auxin. This Zea mays (Maize) protein is Auxin-binding protein 5 (ABP5).